Here is a 240-residue protein sequence, read N- to C-terminus: Large ribosomal subunit protein uL2 (240 aa).

Polar residues predominate over residues 1–11 (MGKRLISQNRG). 2 disordered regions span residues 1–26 (MGKR…KRKG) and 206–240 (GGGR…TGRK). 2 stretches are compositionally biased toward basic residues: residues 13–26 (GTPK…KRKG) and 228–240 (KVGH…TGRK).

Belongs to the universal ribosomal protein uL2 family. As to quaternary structure, part of the 50S ribosomal subunit. Forms a bridge to the 30S subunit in the 70S ribosome.

In terms of biological role, one of the primary rRNA binding proteins. Required for association of the 30S and 50S subunits to form the 70S ribosome, for tRNA binding and peptide bond formation. It has been suggested to have peptidyltransferase activity; this is somewhat controversial. Makes several contacts with the 16S rRNA in the 70S ribosome. The chain is Large ribosomal subunit protein uL2 from Methanococcus vannielii (strain ATCC 35089 / DSM 1224 / JCM 13029 / OCM 148 / SB).